A 171-amino-acid polypeptide reads, in one-letter code: uncharacterized protein (171 aa).

Residues 123–171 (CTKRDLRNDPPPAYQPDDPLKDLRKNFEKKEKPTWNDVEKKKNGVFEFH) are disordered. Residues 140 to 171 (DPLKDLRKNFEKKEKPTWNDVEKKKNGVFEFH) are compositionally biased toward basic and acidic residues.

This is an uncharacterized protein from Caenorhabditis elegans.